Here is a 411-residue protein sequence, read N- to C-terminus: uncharacterized protein (411 aa).

The region spanning 20–199 is the UmuC domain; the sequence is FLYFDFDAFF…LPITEIPGIG (180 aa).

Belongs to the DNA polymerase type-Y family.

This is an uncharacterized protein from Mycoplasma genitalium (strain ATCC 33530 / DSM 19775 / NCTC 10195 / G37) (Mycoplasmoides genitalium).